Consider the following 926-residue polypeptide: LPS-assembly protein LptD (926 aa).

Positions 1-22 (MALKSPAFRKKFPLLVTGSLLA) are cleaved as a signal peptide. A disordered region spans residues 55–91 (AAAVDLPPRPVHDTTSVSSNGTVTSQGTSSGEQSAGT). Residues 68–91 (TTSVSSNGTVTSQGTSSGEQSAGT) are compositionally biased toward low complexity.

Belongs to the LptD family. Component of the lipopolysaccharide transport and assembly complex. Interacts with LptE and LptA.

It is found in the cell outer membrane. Its function is as follows. Together with LptE, is involved in the assembly of lipopolysaccharide (LPS) at the surface of the outer membrane. The protein is LPS-assembly protein LptD of Pseudomonas syringae pv. syringae (strain B728a).